We begin with the raw amino-acid sequence, 470 residues long: MSQNFGRISQVIGAVIDVEFEPGKLPPIYNALRVTNPAIDDKEYNLVLEVAQHLGENSVRTIAMDSTDGLVRGQAALDTGKQISVPVGRKTLGRILNVIGEPVDEMGPVNAEKEYGIHRESPSFVDQSTKVEAFTTGIKVVDLLAPYARGGKIGLFGGAGVGKTVLIMELINNIAKQHGGFSVFAGVGERTREGNDLWMEMKESGVLDKAALVYGQMNEPPGARARVALSALSIAEYFRDEEGQNVLLFIDNIFRFTQAGSEVSALLGRIPSAVGYQPTLATEMGELQERITSTTKGSITSVQAIYVPADDLTDPAPATAFAHLDATTVLSRQIAELGIYPAVDPLDSTSRILDPQVIGEEHYAIARQVQYVLQKYKDLQDIIAILGMDELSEEDKLVVARARKIQRFLSQPFHVAEAFTGSPGKYVELKDTIKGFQEIVAGKHDDIPEQAFYMVGTIEEALEKAKKLAA.

157–164 contributes to the ATP binding site; sequence GGAGVGKT.

This sequence belongs to the ATPase alpha/beta chains family. F-type ATPases have 2 components, CF(1) - the catalytic core - and CF(0) - the membrane proton channel. CF(1) has five subunits: alpha(3), beta(3), gamma(1), delta(1), epsilon(1). CF(0) has three main subunits: a(1), b(2) and c(9-12). The alpha and beta chains form an alternating ring which encloses part of the gamma chain. CF(1) is attached to CF(0) by a central stalk formed by the gamma and epsilon chains, while a peripheral stalk is formed by the delta and b chains.

It is found in the cell inner membrane. The enzyme catalyses ATP + H2O + 4 H(+)(in) = ADP + phosphate + 5 H(+)(out). Functionally, produces ATP from ADP in the presence of a proton gradient across the membrane. The catalytic sites are hosted primarily by the beta subunits. The protein is ATP synthase subunit beta of Geobacter metallireducens (strain ATCC 53774 / DSM 7210 / GS-15).